A 192-amino-acid chain; its full sequence is 3-hydroxyanthranilate 3,4-dioxygenase (192 aa).

Arginine 50 serves as a coordination point for O2. The Fe cation site is built by histidine 54, glutamate 60, and histidine 102. Position 60 (glutamate 60) interacts with substrate. Positions 106 and 116 each coordinate substrate. Cysteine 131, cysteine 134, cysteine 168, and cysteine 171 together coordinate a divalent metal cation.

The protein belongs to the 3-HAO family. The cofactor is Fe(2+).

Its subcellular location is the cytoplasm. The enzyme catalyses 3-hydroxyanthranilate + O2 = (2Z,4Z)-2-amino-3-carboxymuconate 6-semialdehyde. Its pathway is cofactor biosynthesis; NAD(+) biosynthesis; quinolinate from L-kynurenine: step 3/3. Functionally, catalyzes the oxidative ring opening of 3-hydroxyanthranilate to 2-amino-3-carboxymuconate semialdehyde, which spontaneously cyclizes to quinolinate. The polypeptide is 3-hydroxyanthranilate 3,4-dioxygenase (Coccidioides immitis (strain RS) (Valley fever fungus)).